The primary structure comprises 126 residues: Holo-[acyl-carrier-protein] synthase (126 aa).

Asp9 and Glu58 together coordinate Mg(2+).

It belongs to the P-Pant transferase superfamily. AcpS family. Mg(2+) is required as a cofactor.

The protein resides in the cytoplasm. It catalyses the reaction apo-[ACP] + CoA = holo-[ACP] + adenosine 3',5'-bisphosphate + H(+). In terms of biological role, transfers the 4'-phosphopantetheine moiety from coenzyme A to a Ser of acyl-carrier-protein. This chain is Holo-[acyl-carrier-protein] synthase, found in Salmonella choleraesuis (strain SC-B67).